Here is a 291-residue protein sequence, read N- to C-terminus: Diaminopimelate epimerase (291 aa).

Positions 11 and 78 each coordinate substrate. Residue Cys87 is the Proton donor of the active site. Residues 88 to 89, Asn166, Asn200, and 218 to 219 each bind substrate; these read GN and ER. Cys227 functions as the Proton acceptor in the catalytic mechanism. A substrate-binding site is contributed by 228–229; sequence GT.

Belongs to the diaminopimelate epimerase family. In terms of assembly, homodimer.

Its subcellular location is the cytoplasm. The enzyme catalyses (2S,6S)-2,6-diaminopimelate = meso-2,6-diaminopimelate. It participates in amino-acid biosynthesis; L-lysine biosynthesis via DAP pathway; DL-2,6-diaminopimelate from LL-2,6-diaminopimelate: step 1/1. Catalyzes the stereoinversion of LL-2,6-diaminopimelate (L,L-DAP) to meso-diaminopimelate (meso-DAP), a precursor of L-lysine and an essential component of the bacterial peptidoglycan. The polypeptide is Diaminopimelate epimerase (Mycolicibacterium smegmatis (strain ATCC 700084 / mc(2)155) (Mycobacterium smegmatis)).